The following is a 293-amino-acid chain: uncharacterized protein (293 aa).

The HTH lysR-type domain occupies 1–58 (MQLQELHMLVVLAEELNMRKAAERLFVSQPALSQRLQTIEKAWGTKIFLRSQKGLTVT). The H-T-H motif DNA-binding region spans 18–37 (MRKAAERLFVSQPALSQRLQ).

Belongs to the LysR transcriptional regulatory family.

This is an uncharacterized protein from Bacillus subtilis (strain 168).